Reading from the N-terminus, the 630-residue chain is 1-deoxy-D-xylulose-5-phosphate synthase (630 aa).

Thiamine diphosphate is bound by residues histidine 80 and 121–123 (GHS). Mg(2+) is bound at residue aspartate 152. Thiamine diphosphate contacts are provided by residues 153–154 (GA), asparagine 181, tyrosine 288, and glutamate 370. Residue asparagine 181 coordinates Mg(2+).

Belongs to the transketolase family. DXPS subfamily. Homodimer. The cofactor is Mg(2+). Requires thiamine diphosphate as cofactor.

It carries out the reaction D-glyceraldehyde 3-phosphate + pyruvate + H(+) = 1-deoxy-D-xylulose 5-phosphate + CO2. Its pathway is metabolic intermediate biosynthesis; 1-deoxy-D-xylulose 5-phosphate biosynthesis; 1-deoxy-D-xylulose 5-phosphate from D-glyceraldehyde 3-phosphate and pyruvate: step 1/1. In terms of biological role, catalyzes the acyloin condensation reaction between C atoms 2 and 3 of pyruvate and glyceraldehyde 3-phosphate to yield 1-deoxy-D-xylulose-5-phosphate (DXP). This chain is 1-deoxy-D-xylulose-5-phosphate synthase, found in Colwellia psychrerythraea (strain 34H / ATCC BAA-681) (Vibrio psychroerythus).